The sequence spans 336 residues: UDP-N-acetylenolpyruvoylglucosamine reductase (336 aa).

Residues 17 to 188 form the FAD-binding PCMH-type domain; sequence GFDVRARYAS…TAVTLRLSRD (172 aa). Residue Arg164 is part of the active site. Ser236 functions as the Proton donor in the catalytic mechanism. The active site involves Glu332.

The protein belongs to the MurB family. FAD serves as cofactor.

The protein resides in the cytoplasm. The catalysed reaction is UDP-N-acetyl-alpha-D-muramate + NADP(+) = UDP-N-acetyl-3-O-(1-carboxyvinyl)-alpha-D-glucosamine + NADPH + H(+). It functions in the pathway cell wall biogenesis; peptidoglycan biosynthesis. Its function is as follows. Cell wall formation. The sequence is that of UDP-N-acetylenolpyruvoylglucosamine reductase from Cupriavidus pinatubonensis (strain JMP 134 / LMG 1197) (Cupriavidus necator (strain JMP 134)).